The following is a 424-amino-acid chain: Ubiquitin carboxyl-terminal hydrolase 12/46 homolog (424 aa).

The USP domain maps to 24–421 (FGLVNFGNTC…TGYILFYQSR (398 aa)). C33 serves as the catalytic Nucleophile. Positions 131–189 (NAGPSNGNPKATNQGGSTSAMASSIASKSSSTSNSNSNSNSTTNSNGNSSNSTGSLNAN) are disordered. A compositionally biased stretch (polar residues) spans 133 to 144 (GPSNGNPKATNQ). Positions 145–189 (GGSTSAMASSIASKSSSTSNSNSNSNSTTNSNGNSSNSTGSLNAN) are enriched in low complexity. H369 (proton acceptor) is an active-site residue.

The protein belongs to the peptidase C19 family. Catalytic component of the Usp12-46 deubiquitylase complex consisting of Usp12-46, Wdr20 and Uaf1. The Usp12-46 deubiquitylase complex associates with arr/arrow; the interaction leads to deubiquitination and stabilization of arr/arrow.

It catalyses the reaction Thiol-dependent hydrolysis of ester, thioester, amide, peptide and isopeptide bonds formed by the C-terminal Gly of ubiquitin (a 76-residue protein attached to proteins as an intracellular targeting signal).. In terms of biological role, catalytic component of the Usp12-46 deubiquitylase complex. Deubiquitylates the wg/wingless-signaling receptor arr/arrow, which stabilizes the receptor and increases its concentration at the cell surface; this enhances the sensitivity of cells to wg/wingless-signal stimulation. This increases the amplitude and spatial range of the signaling response to the wg/wingless morphogen gradient, facilitating the precise, concentration-dependent regulation of its target genes. Required for wg/wingless-mediated signaling in the wing imaginal disc and for wg/wingless-dependent regulation of adult intestinal stem cell proliferation. Negative regulator of Notch signaling, possibly by regulating lysosomal degradation of N/Notch and affecting cell surface receptor levels; this may be context and cell-type specific function involved in external sensory organ development but not in wing imaginal-disc dorsoventral boundary signaling. Protects against HTT/huntingtin-induced polyglutamine expansion-dependent neurodegeneration. The sequence is that of Ubiquitin carboxyl-terminal hydrolase 12/46 homolog from Drosophila melanogaster (Fruit fly).